We begin with the raw amino-acid sequence, 827 residues long: Transcription factor SOX-6 (827 aa).

Residues 1–10 show a composition bias toward polar residues; sequence MSSKQATSPF. The tract at residues 1-51 is disordered; the sequence is MSSKQATSPFACTADGEEAMTQDLTSREKEEGSDQHPASHLPLHPIMHNKP. Residues 25–34 are compositionally biased toward basic and acidic residues; it reads TSREKEEGSD. The residue at position 119 (Thr119) is a Phosphothreonine. The stretch at 184–262 forms a coiled coil; that stretch reads LAEKERQLST…LLQQQIQVQG (79 aa). Disordered stretches follow at residues 334–361 and 379–470; these read QINP…GHSY and VSPG…PIGG. A compositionally biased stretch (basic and acidic residues) spans 341–357; that stretch reads GISDRFGRNLDPSEHGG. Residue Ser399 is modified to Phosphoserine. Thr401 bears the Phosphothreonine mark. Glycyl lysine isopeptide (Lys-Gly) (interchain with G-Cter in SUMO) cross-links involve residues Lys404 and Lys417. Composition is skewed to polar residues over residues 421-431 and 439-461; these read TAQPLNLSSRP and SPTS…LPNK. Residues Ser439 and Ser442 each carry the phosphoserine modification. The segment at residues 620 to 688 is a DNA-binding region (HMG box); that stretch reads IKRPMNAFMV…IHLEKYPNYK (69 aa). Disordered regions lie at residues 752 to 772 and 786 to 827; these read TPSP…EPSL and ASLA…VSAN. Positions 795-808 are enriched in acidic residues; it reads NGEDEMEAYDDYED.

As to quaternary structure, homodimer. Interacts with DAZAP2. May interact with CENPK. In terms of processing, sumoylation inhibits the transcriptional activity. As to expression, highly expressed in testis.

Its subcellular location is the nucleus. It is found in the cytoplasm. Its function is as follows. Transcription factor that plays a key role in several developmental processes, including neurogenesis, chondrocytes differentiation and cartilage formation. Specifically binds the 5'-AACAAT-3' DNA motif present in enhancers and super-enhancers and promotes expression of genes important for chondrogenesis. Required for overt chondrogenesis when condensed prechondrocytes differentiate into early stage chondrocytes: SOX5 and SOX6 cooperatively bind with SOX9 on active enhancers and super-enhancers associated with cartilage-specific genes, and thereby potentiate SOX9's ability to transactivate. Not involved in precartilaginous condensation, the first step in chondrogenesis, during which skeletal progenitors differentiate into prechondrocytes. Together with SOX5, required to form and maintain a pool of highly proliferating chondroblasts between epiphyses and metaphyses, to form columnar chondroblasts, delay chondrocyte prehypertrophy but promote hypertrophy, and to delay terminal differentiation of chondrocytes on contact with ossification fronts. Binds to the proximal promoter region of the myelin protein MPZ gene, and is thereby involved in the differentiation of oligodendroglia in the developing spinal tube. Binds to the gene promoter of MBP and acts as a transcriptional repressor. This chain is Transcription factor SOX-6, found in Mus musculus (Mouse).